The primary structure comprises 545 residues: CTP synthase (545 aa).

An amidoligase domain region spans residues 1 to 266; sequence MTHFIFVTGG…DDLICERFGY (266 aa). Serine 13 contacts CTP. Residue serine 13 participates in UTP binding. ATP-binding positions include 14–19 and aspartate 71; that span reads SLGKGI. Residues aspartate 71 and glutamate 140 each coordinate Mg(2+). Residues 147–149, 187–192, and lysine 223 contribute to the CTP site; these read DIE and KTKPTQ. UTP contacts are provided by residues 187–192 and lysine 223; that span reads KTKPTQ. ATP is bound at residue 239 to 241; that stretch reads KDA. The Glutamine amidotransferase type-1 domain maps to 292-543; sequence RVAMVGKYVE…IDAAKKQHLK (252 aa). Glycine 353 provides a ligand contact to L-glutamine. The active-site Nucleophile; for glutamine hydrolysis is cysteine 380. L-glutamine contacts are provided by residues 381-384, glutamate 404, and arginine 471; that span reads LGMQ. Active-site residues include histidine 516 and glutamate 518.

The protein belongs to the CTP synthase family. In terms of assembly, homotetramer.

The catalysed reaction is UTP + L-glutamine + ATP + H2O = CTP + L-glutamate + ADP + phosphate + 2 H(+). The enzyme catalyses L-glutamine + H2O = L-glutamate + NH4(+). It catalyses the reaction UTP + NH4(+) + ATP = CTP + ADP + phosphate + 2 H(+). Its pathway is pyrimidine metabolism; CTP biosynthesis via de novo pathway; CTP from UDP: step 2/2. Its activity is regulated as follows. Allosterically activated by GTP, when glutamine is the substrate; GTP has no effect on the reaction when ammonia is the substrate. The allosteric effector GTP functions by stabilizing the protein conformation that binds the tetrahedral intermediate(s) formed during glutamine hydrolysis. Inhibited by the product CTP, via allosteric rather than competitive inhibition. Functionally, catalyzes the ATP-dependent amination of UTP to CTP with either L-glutamine or ammonia as the source of nitrogen. Regulates intracellular CTP levels through interactions with the four ribonucleotide triphosphates. The chain is CTP synthase from Acinetobacter baylyi (strain ATCC 33305 / BD413 / ADP1).